The following is a 79-amino-acid chain: DNA-directed RNA polymerase subunit omega (79 aa).

Belongs to the RNA polymerase subunit omega family. The RNAP catalytic core consists of 2 alpha, 1 beta, 1 beta' and 1 omega subunit. When a sigma factor is associated with the core the holoenzyme is formed, which can initiate transcription.

It carries out the reaction RNA(n) + a ribonucleoside 5'-triphosphate = RNA(n+1) + diphosphate. In terms of biological role, promotes RNA polymerase assembly. Latches the N- and C-terminal regions of the beta' subunit thereby facilitating its interaction with the beta and alpha subunits. This chain is DNA-directed RNA polymerase subunit omega, found in Thermotoga neapolitana (strain ATCC 49049 / DSM 4359 / NBRC 107923 / NS-E).